The chain runs to 558 residues: Kelch-like protein 23 (558 aa).

The 69-residue stretch at 36 to 104 (TDITLQCPSG…AYTSQIEITK (69 aa)) folds into the BTB domain. In terms of domain architecture, BACK spans 139–240 (CIGMHSFAEF…DPVYLKTALG (102 aa)). Kelch repeat units lie at residues 274–320 (TMYI…CLGP), 321–369 (NIYV…TLGG), 370–416 (CVYA…VLHE), 418–466 (IYVI…PFEN), 467–508 (KLYL…IMNG), and 510–557 (IYVT…CVYN).

In Mus musculus (Mouse), this protein is Kelch-like protein 23 (Klhl23).